We begin with the raw amino-acid sequence, 370 residues long: 4-hydroxy-3-methylbut-2-en-1-yl diphosphate synthase (flavodoxin) (370 aa).

[4Fe-4S] cluster is bound by residues Cys-268, Cys-271, Cys-303, and Glu-310.

This sequence belongs to the IspG family. [4Fe-4S] cluster serves as cofactor.

It catalyses the reaction (2E)-4-hydroxy-3-methylbut-2-enyl diphosphate + oxidized [flavodoxin] + H2O + 2 H(+) = 2-C-methyl-D-erythritol 2,4-cyclic diphosphate + reduced [flavodoxin]. Its pathway is isoprenoid biosynthesis; isopentenyl diphosphate biosynthesis via DXP pathway; isopentenyl diphosphate from 1-deoxy-D-xylulose 5-phosphate: step 5/6. Its function is as follows. Converts 2C-methyl-D-erythritol 2,4-cyclodiphosphate (ME-2,4cPP) into 1-hydroxy-2-methyl-2-(E)-butenyl 4-diphosphate. This chain is 4-hydroxy-3-methylbut-2-en-1-yl diphosphate synthase (flavodoxin), found in Bacillus cereus (strain G9842).